The sequence spans 289 residues: Acetyl-coenzyme A carboxylase carboxyl transferase subunit beta 2 (289 aa).

In terms of domain architecture, CoA carboxyltransferase N-terminal spans 25 to 289; that stretch reads VWTKCPSCEQ…TNKSIQPEAE (265 aa). 4 residues coordinate Zn(2+): Cys29, Cys32, Cys48, and Cys51. The segment at 29–51 adopts a C4-type zinc-finger fold; that stretch reads CPSCEQVLYRIALKENLEVCPKC.

It belongs to the AccD/PCCB family. Acetyl-CoA carboxylase is a heterohexamer composed of biotin carboxyl carrier protein (AccB), biotin carboxylase (AccC) and two subunits each of ACCase subunit alpha (AccA) and ACCase subunit beta (AccD). Zn(2+) serves as cofactor.

The protein localises to the cytoplasm. It catalyses the reaction N(6)-carboxybiotinyl-L-lysyl-[protein] + acetyl-CoA = N(6)-biotinyl-L-lysyl-[protein] + malonyl-CoA. It participates in lipid metabolism; malonyl-CoA biosynthesis; malonyl-CoA from acetyl-CoA: step 1/1. Functionally, component of the acetyl coenzyme A carboxylase (ACC) complex. Biotin carboxylase (BC) catalyzes the carboxylation of biotin on its carrier protein (BCCP) and then the CO(2) group is transferred by the transcarboxylase to acetyl-CoA to form malonyl-CoA. In Vibrio campbellii (strain ATCC BAA-1116), this protein is Acetyl-coenzyme A carboxylase carboxyl transferase subunit beta 2.